Here is a 381-residue protein sequence, read N- to C-terminus: MASPSLERPEKGAGKSEFRNQKPKPENQDESELLTVPDGWKEPAFSKEDNPRGLLEESSFATLFPKYREAYLKECWPLVQKALNEHHVNATLDLIEGSMTVCTTKKTFDPYIIIRARDLIKLLARSVSFEQAVRILQDDVACDIIKIGSLVRNKERFVKRRQRLIGPKGSTLKALELLTNCYIMVQGNTVSAIGPFSGLKEVRKVVLDTMKNIHPIYNIKSLMIKRELAKDSELRSQSWERFLPQFKHKNVNKRKEPKKKTVKKEYTPFPPPQPESQIDKELASGEYFLKANQKKRQKMEAIKAKQAEAISKRQEERNKAFIPPKEKPIVKPKEASTETKIDVASIKEKVKKAKNKKLGALTAEEIALKMEADEKKKKKKK.

Residues 1 to 51 (MASPSLERPEKGAGKSEFRNQKPKPENQDESELLTVPDGWKEPAFSKEDNP) form a disordered region. Ala-2 carries the N-acetylalanine modification. Residues Ser-3 and Ser-5 each carry the phosphoserine modification. Composition is skewed to basic and acidic residues over residues 7–27 (ERPE…KPEN) and 39–51 (GWKE…EDNP). Residue Lys-24 forms a Glycyl lysine isopeptide (Lys-Gly) (interchain with G-Cter in SUMO2) linkage. A KH domain is found at 154–206 (KERFVKRRQRLIGPKGSTLKALELLTNCYIMVQGNTVSAIGPFSGLKEVRKVV). Basic residues predominate over residues 250 to 262 (NVNKRKEPKKKTV). Disordered stretches follow at residues 250–278 (NVNK…ESQI) and 309–338 (AISK…ASTE). Glycyl lysine isopeptide (Lys-Gly) (interchain with G-Cter in SUMO2) cross-links involve residues Lys-340 and Lys-369.

Belongs to the KRR1 family. As to quaternary structure, part of the small subunit (SSU) processome, composed of more than 70 proteins and the RNA chaperone small nucleolar RNA (snoRNA) U3. (Microbial infection) Directly interacts with HIV-1 protein VPR. Also identified in a complex with NR3C1 and HIV-1 protein VPR.

It localises to the nucleus. The protein resides in the nucleolus. It is found in the cytoplasm. In terms of biological role, part of the small subunit (SSU) processome, first precursor of the small eukaryotic ribosomal subunit. During the assembly of the SSU processome in the nucleolus, many ribosome biogenesis factors, an RNA chaperone and ribosomal proteins associate with the nascent pre-rRNA and work in concert to generate RNA folding, modifications, rearrangements and cleavage as well as targeted degradation of pre-ribosomal RNA by the RNA exosome. In Homo sapiens (Human), this protein is KRR1 small subunit processome component homolog.